The following is a 524-amino-acid chain: ORC1-type DNA replication protein 4 (524 aa).

Residues 1–23 (MTDKSNNPAPASDPSTTETSNDA) are compositionally biased toward polar residues. Positions 1 to 67 (MTDKSNNPAP…DDPSDEASRG (67 aa)) are disordered. ATP-binding positions include 128–132 (TGKTA), tyrosine 325, and arginine 337.

Belongs to the CDC6/cdc18 family.

Involved in regulation of DNA replication. This is ORC1-type DNA replication protein 4 (cdc6d) from Haloarcula marismortui (strain ATCC 43049 / DSM 3752 / JCM 8966 / VKM B-1809) (Halobacterium marismortui).